Reading from the N-terminus, the 906-residue chain is Aconitate hydratase A (906 aa).

Residues 1–2 (MS) constitute a propeptide that is removed on maturation. Cys441, Cys507, and Cys510 together coordinate [4Fe-4S] cluster.

The protein belongs to the aconitase/IPM isomerase family. In terms of assembly, monomer. [4Fe-4S] cluster is required as a cofactor.

It catalyses the reaction citrate = D-threo-isocitrate. It carries out the reaction (2S,3R)-3-hydroxybutane-1,2,3-tricarboxylate = 2-methyl-cis-aconitate + H2O. It functions in the pathway carbohydrate metabolism; tricarboxylic acid cycle; isocitrate from oxaloacetate: step 2/2. It participates in organic acid metabolism; propanoate degradation. Its function is as follows. Involved in the catabolism of short chain fatty acids (SCFA) via the tricarboxylic acid (TCA)(acetyl degradation route) and probably the 2-methylcitrate cycle I (propionate degradation route). Catalyzes the reversible isomerization of citrate to isocitrate via cis-aconitate. Could catalyze the hydration of 2-methyl-cis-aconitate to yield (2R,3S)-2-methylisocitrate. The apo form of AcnA functions as a RNA-binding regulatory protein. The protein is Aconitate hydratase A (acn) of Deinococcus radiodurans (strain ATCC 13939 / DSM 20539 / JCM 16871 / CCUG 27074 / LMG 4051 / NBRC 15346 / NCIMB 9279 / VKM B-1422 / R1).